We begin with the raw amino-acid sequence, 515 residues long: Protein disulfide-isomerase (515 aa).

Positions Met1–Ala22 are cleaved as a signal peptide. Thioredoxin domains follow at residues Glu23–Gly139 and Phe351–Gln480. Catalysis depends on nucleophile residues Cys58, Cys61, Cys402, and Cys405. Cystine bridges form between Cys58–Cys61 and Cys402–Cys405. The tract at residues Ser477–Leu515 is disordered. A compositionally biased stretch (acidic residues) spans Ala484–Glu507. The Prevents secretion from ER motif lies at Lys512–Leu515.

This sequence belongs to the protein disulfide isomerase family. As to quaternary structure, heterodimer; heterodimerizes with the protein microsomal triglyceride transfer MTTP. Homodimer. Monomers and homotetramers may also occur. Also constitutes the structural subunit of prolyl 4-hydroxylase. Stabilizes this enzyme and retains it in the ER without contributing to the catalytic activity. Binds UBQLN1.

It localises to the endoplasmic reticulum. The protein localises to the endoplasmic reticulum lumen. The protein resides in the cell membrane. The catalysed reaction is Catalyzes the rearrangement of -S-S- bonds in proteins.. In terms of biological role, this multifunctional protein catalyzes the formation, breakage and rearrangement of disulfide bonds. At the cell surface, seems to act as a reductase that cleaves disulfide bonds of proteins attached to the cell. May therefore cause structural modifications of exofacial proteins. Inside the cell, seems to form/rearrange disulfide bonds of nascent proteins. At high concentrations, functions as a chaperone that inhibits aggregation of misfolded proteins. At low concentrations, facilitates aggregation (anti-chaperone activity). Also acts a structural subunit of various enzymes such as prolyl 4-hydroxylase. In Gallus gallus (Chicken), this protein is Protein disulfide-isomerase (P4HB).